The primary structure comprises 83 residues: Small ribosomal subunit protein bS16 (83 aa).

This sequence belongs to the bacterial ribosomal protein bS16 family.

This chain is Small ribosomal subunit protein bS16, found in Finegoldia magna (strain ATCC 29328 / DSM 20472 / WAL 2508) (Peptostreptococcus magnus).